A 388-amino-acid chain; its full sequence is Putative C-&gt;U-editing enzyme APOBEC-4 (388 aa).

In terms of domain architecture, CMP/dCMP-type deaminase spans 60-176 (PQTKHLTFYE…AWNREALRGL (117 aa)). H92 is a binding site for Zn(2+). Catalysis depends on E94, which acts as the Proton donor. Positions 126 and 133 each coordinate Zn(2+). The disordered stretch occupies residues 322–356 (KVKALRKSPSGRPVKKEEARKGSTRSQEANETNKS).

Belongs to the cytidine and deoxycytidylate deaminase family. Zn(2+) serves as cofactor.

In terms of biological role, putative C to U editing enzyme whose physiological substrate is not yet known. This is Putative C-&gt;U-editing enzyme APOBEC-4 (Apobec4) from Rattus norvegicus (Rat).